Here is a 562-residue protein sequence, read N- to C-terminus: MDAMKRGLCCVLLLCGAVFVSPSQEIHARFRRGARSYQVICRDEKTQMIYQQHQSWLRPVLRSNRVEYCWCNSGRAQCHSVPVKSCSEPRCFNGGTCQQALYFSDFVCQCPEGFAGKCCEIDTRATCYEDQGISYRGTWSTAESGAECTNWNSSALAQKPYSGRRPDAIRLGLGNHNYCRNPDRDSKPWCYVFKAGKYSSEFCSTPACSEGNSDCYFGNGSAYRGTHSLTESGASCLPWNSMILIGKVYTAQNPSAQALGLGKHNYCRNPDGDAKPWCHVLKNRRLTWEYCDVPSCSTCGLRQYSQPQFRIKGGLFADIASHPWQAAIFAKHRRSPGERFLCGGILISSCWILSAAHCFQERFPPHHLTVILGRTYRVVPGEEEQKFEVEKYIVHKEFDDDTYDNDIALLQLKSDSSRCAQESSVVRTVCLPPADLQLPDWTECELSGYGKHEALSPFYSERLKEAHVRLYPSSRCTSQHLLNRTVTDNMLCAGDTRSGGPQANLHDACQGDSGGPLVCLNDGRMTLVGIISWGLGCGQKDVPGVYTKVTNYLDWIRDNMRP.

A signal peptide spans 1–22 (MDAMKRGLCCVLLLCGAVFVSP). The propeptide occupies 23-32 (SQEIHARFRR). A propeptide spans 33 to 35 (GAR) (removed by plasmin). Positions 39–81 (VICRDEKTQMIYQQHQSWLRPVLRSNRVEYCWCNSGRAQCHSV) constitute a Fibronectin type-I domain. 17 disulfide bridges follow: Cys-41-Cys-71, Cys-69-Cys-78, Cys-86-Cys-97, Cys-91-Cys-108, Cys-110-Cys-119, Cys-127-Cys-208, Cys-148-Cys-190, Cys-179-Cys-203, Cys-215-Cys-296, Cys-236-Cys-278, Cys-267-Cys-291, Cys-299-Cys-430, Cys-342-Cys-358, Cys-350-Cys-419, Cys-444-Cys-519, Cys-476-Cys-492, and Cys-509-Cys-537. The important for binding to annexin A2 stretch occupies residues 42 to 52 (RDEKTQMIYQQ). Residues 82–120 (PVKSCSEPRCFNGGTCQQALYFSDFVCQCPEGFAGKCCE) form the EGF-like domain. Thr-96 carries O-linked (Fuc) threonine glycosylation. Kringle domains lie at 127-208 (CYED…TPAC) and 215-296 (CYFG…VPSC). Asn-152 carries N-linked (GlcNAc...) asparagine glycosylation. Asn-219 is a glycosylation site (N-linked (GlcNAc...) asparagine; partial). The region spanning 311–561 (IKGGLFADIA…YLDWIRDNMR (251 aa)) is the Peptidase S1 domain. Active-site charge relay system residues include His-357 and Asp-406. An N-linked (GlcNAc...) asparagine glycan is attached at Asn-483. The active-site Charge relay system is Ser-513.

This sequence belongs to the peptidase S1 family. As to quaternary structure, heterodimer of chain A and chain B held by a disulfide bond. Forms a heterodimer with SERPINA5. Binds to fibrin with high affinity. This interaction leads to an increase in the catalytic efficiency of the enzyme between 100-fold and 1000-fold, due to an increase in affinity for plasminogen. Similarly, binding to heparin increases the activation of plasminogen. Binds to annexin A2, cytokeratin-8, fibronectin and laminin. Binds to mannose receptor and the low-density lipoprotein receptor-related protein (LRP1); these proteins are involved in TPA clearance. Yet unidentified interactions on endothelial cells and vascular smooth muscle cells (VSMC) lead to a 100-fold stimulation of plasminogen activation. In addition, binding to VSMC reduces TPA inhibition by PAI-1 by 30-fold. Binds LRP1B; binding is followed by internalization and degradation. Interacts with SERPINE1. In complex with SERPINE1, interacts with SORL1. Interacts with apyrase from Anopheles gambiae saliva; the interaction results in PLAT activation probably via an allosteric activation mechanism. The single chain, almost fully active enzyme, can be further processed into a two-chain fully active form by a cleavage after Arg-310 catalyzed by plasmin, tissue kallikrein or factor Xa. In terms of processing, differential cell-specific N-linked glycosylation gives rise to two glycoforms, type I (glycosylated at Asn-219) and type II (not glycosylated at Asn-219). The single chain type I glycoform is less readily converted into the two-chain form by plasmin, and the two-chain type I glycoform has a lower activity than the two-chain type II glycoform in the presence of fibrin. Post-translationally, N-glycosylation of Asn-152; the bound oligomannosidic glycan is involved in the interaction with the mannose receptor. Characterization of O-linked glycan was studied in Bowes melanoma cell line. Synthesized in numerous tissues (including tumors) and secreted into most extracellular body fluids, such as plasma, uterine fluid, saliva, gingival crevicular fluid, tears, seminal fluid, and milk.

It is found in the secreted. The protein localises to the extracellular space. It catalyses the reaction Specific cleavage of Arg-|-Val bond in plasminogen to form plasmin.. Its activity is regulated as follows. Inhibited by SERPINA5. Inhibited by SERPINE1. Functionally, converts the abundant, but inactive, zymogen plasminogen to plasmin by hydrolyzing a single Arg-Val bond in plasminogen. By controlling plasmin-mediated proteolysis, it plays an important role in tissue remodeling and degradation, in cell migration and many other physiopathological events. During oocyte activation, plays a role in cortical granule reaction in the zona reaction, which contributes to the block to polyspermy. In Homo sapiens (Human), this protein is Tissue-type plasminogen activator.